A 307-amino-acid polypeptide reads, in one-letter code: Fructokinase (307 aa).

Belongs to the carbohydrate kinase PfkB family.

The enzyme catalyses D-fructose + ATP = D-fructose 6-phosphate + ADP + H(+). The polypeptide is Fructokinase (scrK) (Salmonella typhimurium).